Here is a 101-residue protein sequence, read N- to C-terminus: Small ribosomal subunit protein uS10 (101 aa).

Belongs to the universal ribosomal protein uS10 family. As to quaternary structure, part of the 30S ribosomal subunit.

Involved in the binding of tRNA to the ribosomes. This is Small ribosomal subunit protein uS10 from Phocaeicola vulgatus (strain ATCC 8482 / DSM 1447 / JCM 5826 / CCUG 4940 / NBRC 14291 / NCTC 11154) (Bacteroides vulgatus).